The primary structure comprises 430 residues: MDIFKNRNFVRLFFAALASQMGTTVGNMAFAFFLLDRFSSQPSYTTLAELMYSLPTIFVFLIVGVVADRFDRKKVAENCDWIRAGLTVVLFFTLFTGNIPLVFCILFIRSAVTKFFFPAENSLVQAILPKEHYAKAAGLNQMLFSIFMVFGVGIGAFMYNTIGIEGAIILDFVSFIISGLLIRSCRIPKEARQPNGAFSWRKTSVKDSINDFREGILYILKNKLLASLIFGFFIFGFVNGGFAVLPMFTMKYGLAPDRYEWHTSVFTIALGFGLLAGSVIGTLISKKVKPHFLMSIPIFIAGLLIFVLGYTNILWVYYAAAFALGMCIGPINIAIGGWMPKIVHPKLMGRVSGMQDPFMMFAQSLTLGLVALLFPKFVSNIDYLYYGMGVIILLVFIFYFIALPKYSAQAVEVNVQEAFQEQPKKKARSV.

10 helical membrane passes run 13 to 33, 47 to 67, 88 to 108, 138 to 158, 228 to 248, 264 to 284, 296 to 316, 319 to 339, 358 to 378, and 383 to 403; these read FFAA…FAFF, LAEL…GVVA, VVLF…ILFI, GLNQ…GAFM, LIFG…LPMF, SVFT…GTLI, IPIF…ILWV, AAAF…GGWM, FMMF…PKFV, and YLYY…FIAL.

The protein belongs to the major facilitator superfamily.

The protein localises to the cell membrane. This is an uncharacterized protein from Bacillus subtilis (strain 168).